The following is a 427-amino-acid chain: Serine--tRNA ligase (427 aa).

230-232 (TSE) is an L-serine binding site. Residue 261-263 (RSE) coordinates ATP. Glu-284 lines the L-serine pocket. 348 to 351 (EISS) is an ATP binding site. L-serine is bound at residue Ser-384.

The protein belongs to the class-II aminoacyl-tRNA synthetase family. Type-1 seryl-tRNA synthetase subfamily. As to quaternary structure, homodimer. The tRNA molecule binds across the dimer.

It is found in the cytoplasm. The enzyme catalyses tRNA(Ser) + L-serine + ATP = L-seryl-tRNA(Ser) + AMP + diphosphate + H(+). The catalysed reaction is tRNA(Sec) + L-serine + ATP = L-seryl-tRNA(Sec) + AMP + diphosphate + H(+). It participates in aminoacyl-tRNA biosynthesis; selenocysteinyl-tRNA(Sec) biosynthesis; L-seryl-tRNA(Sec) from L-serine and tRNA(Sec): step 1/1. Catalyzes the attachment of serine to tRNA(Ser). Is also able to aminoacylate tRNA(Sec) with serine, to form the misacylated tRNA L-seryl-tRNA(Sec), which will be further converted into selenocysteinyl-tRNA(Sec). The protein is Serine--tRNA ligase of Desulforapulum autotrophicum (strain ATCC 43914 / DSM 3382 / VKM B-1955 / HRM2) (Desulfobacterium autotrophicum).